A 197-amino-acid chain; its full sequence is Imidazoleglycerol-phosphate dehydratase (197 aa).

The protein belongs to the imidazoleglycerol-phosphate dehydratase family.

The protein resides in the cytoplasm. The enzyme catalyses D-erythro-1-(imidazol-4-yl)glycerol 3-phosphate = 3-(imidazol-4-yl)-2-oxopropyl phosphate + H2O. Its pathway is amino-acid biosynthesis; L-histidine biosynthesis; L-histidine from 5-phospho-alpha-D-ribose 1-diphosphate: step 6/9. This chain is Imidazoleglycerol-phosphate dehydratase, found in Syntrophomonas wolfei subsp. wolfei (strain DSM 2245B / Goettingen).